The primary structure comprises 126 residues: Small ribosomal subunit protein uS13 (126 aa).

A disordered region spans residues 98-126 (VRGQSTKNNARTRKGKRKTVANKKKAAKK). Residues 107–126 (ARTRKGKRKTVANKKKAAKK) show a composition bias toward basic residues.

It belongs to the universal ribosomal protein uS13 family. As to quaternary structure, part of the 30S ribosomal subunit. Forms a loose heterodimer with protein S19. Forms two bridges to the 50S subunit in the 70S ribosome.

Its function is as follows. Located at the top of the head of the 30S subunit, it contacts several helices of the 16S rRNA. In the 70S ribosome it contacts the 23S rRNA (bridge B1a) and protein L5 of the 50S subunit (bridge B1b), connecting the 2 subunits; these bridges are implicated in subunit movement. Contacts the tRNAs in the A and P-sites. This Amoebophilus asiaticus (strain 5a2) protein is Small ribosomal subunit protein uS13.